A 124-amino-acid chain; its full sequence is Acidic phospholipase A2 (124 aa).

7 disulfide bridges follow: cysteine 26–cysteine 116, cysteine 28–cysteine 44, cysteine 43–cysteine 95, cysteine 49–cysteine 124, cysteine 50–cysteine 88, cysteine 57–cysteine 81, and cysteine 75–cysteine 86. Positions 27, 29, and 31 each coordinate Ca(2+). The active site involves histidine 47. Aspartate 48 contacts Ca(2+). Aspartate 89 is an active-site residue.

This sequence belongs to the phospholipase A2 family. Group II subfamily. D49 sub-subfamily. Monomer. Requires Ca(2+) as cofactor. Expressed by the venom gland.

Its subcellular location is the secreted. The enzyme catalyses a 1,2-diacyl-sn-glycero-3-phosphocholine + H2O = a 1-acyl-sn-glycero-3-phosphocholine + a fatty acid + H(+). Its function is as follows. Snake venom phospholipase A2 (PLA2) that acts in vivo as an anti-thrombotic agent. Inhibits platelet aggregation induced by ADP, arachidonic acid, and thrombin. PLA2 catalyzes the calcium-dependent hydrolysis of the 2-acyl groups in 3-sn-phosphoglycerides. The polypeptide is Acidic phospholipase A2 (Gloydius halys (Chinese water mocassin)).